The sequence spans 768 residues: Protein STRUBBELIG (768 aa).

The first 24 residues, 1 to 24 (MSFTRWEVFFGLSVLALTMPFSAG), serve as a signal peptide directing secretion. The Extracellular segment spans residues 25–341 (VTNLRDVSAI…GSGKFWSTQR (317 aa)). Cysteine 57 and cysteine 66 are joined by a disulfide. N-linked (GlcNAc...) asparagine glycosylation occurs at asparagine 70. 6 LRR repeats span residues 94-115 (SIQV…ALPS), 116-139 (SIRN…SFLS), 140-162 (DLSE…FQQL), 164-186 (KLTK…MGDL), 188-210 (SLKI…EDLF), and 211-231 (LTDL…NLLK). A glycan (N-linked (GlcNAc...) asparagine) is linked at asparagine 119. The interval 241 to 334 (PFNTSIITPP…ISPPSGSGSG (94 aa)) is disordered. Residue asparagine 243 is glycosylated (N-linked (GlcNAc...) asparagine). Pro residues-rich tracts occupy residues 248–283 (TPPP…PFAP) and 291–301 (QHPPPSPPLVW). The segment covering 315–334 (NSVSGQPTLQISPPSGSGSG) has biased composition (polar residues). The helical transmembrane segment at 342 to 362 (IILVVSSVAIIVLVSGLCVTL) threads the bilayer. Over 363-768 (WRCCRSKIYN…EIVQDLQHMI (406 aa)) the chain is Cytoplasmic. A disordered region spans residues 385-477 (PYFNKPPSQP…RAAHFPPGLN (93 aa)). The segment covering 439–464 (SYYNKDVNTPQKPLQQPPRQFQSNDT) has biased composition (polar residues). A Protein kinase domain is found at 497–768 (FSEENIIGEG…EIVQDLQHMI (272 aa)). ATP is bound by residues 503–511 (IGEGSIGNV) and lysine 525.

This sequence belongs to the protein kinase superfamily. Ser/Thr protein kinase family. Interacts (via intra-cellular domain) with AN; this interaction is not required for correct subcellular localization and recycling of SUB. Binds to QKY and POQ at the plasma membrane. Binds to QKY at plasmodesmata (PD) in root epidermal cells to promote tissue morphogenesis. As to expression, expressed in leaves, stems, inflorescences, flower buds and developing root epidermis.

It is found in the cell membrane. The protein localises to the cell junction. The protein resides in the plasmodesma. Regulated at the post-transcriptional level. In terms of biological role, regulates the expression of transcription factors that define the cell fates. Acts in a non-cell-autonomous fashion, functions in a radial inside-out signaling process, and mediates cell morphogenesis and cell fate across clonally distinct cell layers in floral primordia, developing ovules, and root meristems. Seems to be required for the regulation of cell shape and the orientation of the mitotic division plane. Involved in root hair specification, in the formation of the outer integument and the shape of organs such as carpels and petals and is necessary for the shape and height of the stem. Non-functional SUB proteins are retained in the endoplasmic reticulum and degraded by endoplasmic reticulum-associated degradation (ERAD). Collaboratively with QKY and POQ, regulates cell growth anisotropy during gynoecium development, thus linking together cell-cell communication and cellular growth. Together with QKY, links RLK-dependent signal transduction and intercellular communication mediated by plasmodesmata (PD) to regulate tissue morphogenesis. In Arabidopsis thaliana (Mouse-ear cress), this protein is Protein STRUBBELIG.